The chain runs to 114 residues: Gas vesicle protein J (114 aa).

The interval 63-114 (PTGTDMERVEEAAGISPDESRSLDTRSESEQMDELPGEAGASVSNTAPQEEE) is disordered. Positions 80–91 (DESRSLDTRSES) are enriched in basic and acidic residues. The segment covering 104-114 (SVSNTAPQEEE) has biased composition (polar residues).

The protein belongs to the gas vesicle GvpA family. As to quaternary structure, gvpF to GvpM interact with each other in vitro, and may form multi-subunit complex(es). Interacts with GvpA.

Its subcellular location is the gas vesicle. Its function is as follows. A minor component of the gas vesicle, proteins GvpF to GvpM might be involved in nucleating gas vesicle formation. Gas vesicles are hollow, gas filled proteinaceous nanostructures found in some microorganisms. They allow positioning of halobacteria at the optimal depth for growth in the poorly aerated, shallow brine pools of their habitat. Functionally, expression of a 9.5 kb mc-vac DNA fragment containing 2 divergently transcribed regions (gvpD-gvpE-gvpF-gvpG-gvpH-gvpI-gvpJ-gvpK-gvpL-gvpM and gvpA-gvpC-gvpN-gvpO) allows H.volcanii to produce gas vesicles. This Haloferax mediterranei (strain ATCC 33500 / DSM 1411 / JCM 8866 / NBRC 14739 / NCIMB 2177 / R-4) (Halobacterium mediterranei) protein is Gas vesicle protein J.